An 886-amino-acid polypeptide reads, in one-letter code: Vam6/Vps39-like protein (886 aa).

Residues Pro15–Ile294 enclose the CNH domain. A CHCR repeat occupies Phe573 to Ser750.

The protein belongs to the VAM6/VPS39 family. Homooligomer. Interacts with TGFBR2 and, less efficiently, with TGFBR1; interaction with TGFBR2 is independent of the receptor kinase activity and of the presence of TGF-beta. Also interacts with ACVR2B, but not with BMPR2. Interacts with SMAD4, preferentially following TGF-beta treatment. Does not interact with SAMD2 or SMAD3. Component of the homotypic fusion and vacuole protein sorting (HOPS) complex; the core of which composed of the class C Vps proteins VPS11, VPS16, VPS18 and VPS33A, is associated with VPS39 and VPS41. Interacts with PLEKHM2; involved in VPS39 recruitment to ARL8B-containing lysosomes. Associates with adapter protein complex 3 (AP-3) and clathrin:AP-3 complexes. Interacts with STX17; this interaction is increased in the absence of TMEM39A. Interacts with RAB7, RAB2A and RAB2B. Interacts with RAB2A (GTP-bound); the interaction contributes to obtaining a functional HOPS complex that promotes autophagosome-lysosome membrane fusion driven by STX17-SNAP29-VAMP8. Interacts with RAB39A (GTP-bound) and RAB39B (GTP-bound); interaction with RAB39A contributes to obtaining a functional HOPS complex. As to quaternary structure, (Microbial infection) Interacts with SARS coronavirus-2/SARS-CoV-2 ORF3A protein; the interaction is direct and sequestrates VPS39, thereby preventing HOPS complex from interacting with the autophagosomal SNARE protein STX17. ORF3A enhances the interaction of VPS39 with VPS11 and VPS18, while its interaction with the VPS16:VPS33A module is attenuated. Widely expressed, with highest levels in heart, skeletal muscle, kidney, pancreas, brain, placenta and spleen.

It is found in the cytoplasm. Its subcellular location is the lysosome membrane. The protein localises to the late endosome membrane. In terms of biological role, regulator of TGF-beta/activin signaling, inhibiting SMAD3- and activating SMAD2-dependent transcription. Acts by interfering with SMAD3/SMAD4 complex formation, this would lead to inhibition of SMAD3-dependent transcription and relieve SMAD3 inhibition of SMAD2-dependent promoters, thus increasing SMAD2-dependent transcription. Does not affect TGF-beta-induced SMAD2 or SMAD3 phosphorylation, nor SMAD2/SMAD4 complex formation. Plays a role in vesicle-mediated protein trafficking to lysosomal compartments including the endocytic membrane transport and autophagic pathways. Acts as a component of the HOPS endosomal tethering complex. This complex is proposed to be involved in the Rab5-to-Rab7 endosome conversion probably implicating MON1A/B, and via binding SNAREs and SNARE complexes to mediate tethering and docking events during SNARE-mediated membrane fusion. The HOPS complex is proposed to be recruited to Rab7 on the late endosomal membrane and to regulate late endocytic, phagocytic and autophagic traffic towards lysosomes. Involved in homotypic vesicle fusions between late endosomes and in heterotypic fusions between late endosomes and lysosomes. Required for fusion of endosomes and autophagosomes with lysosomes. The sequence is that of Vam6/Vps39-like protein from Homo sapiens (Human).